Consider the following 167-residue polypeptide: Ribosome maturation factor RimM (167 aa).

Residues 94–165 (ENEFYYSDII…KIIITPMEGL (72 aa)) enclose the PRC barrel domain.

This sequence belongs to the RimM family. In terms of assembly, binds ribosomal protein uS19.

It localises to the cytoplasm. An accessory protein needed during the final step in the assembly of 30S ribosomal subunit, possibly for assembly of the head region. Essential for efficient processing of 16S rRNA. May be needed both before and after RbfA during the maturation of 16S rRNA. It has affinity for free ribosomal 30S subunits but not for 70S ribosomes. The polypeptide is Ribosome maturation factor RimM (Staphylococcus aureus (strain Mu3 / ATCC 700698)).